The sequence spans 254 residues: Pre-miRNA 5'-monophosphate methyltransferase (254 aa).

Residues 34-254 form the Bin3-type SAM domain; sequence ENRLSLIPEA…DRSLLLFRRQ (221 aa). S-adenosyl-L-methionine is bound by residues R36, N66, D99, and 124–125; that span reads DI.

Belongs to the methyltransferase superfamily.

The protein localises to the cytoplasm. The catalysed reaction is a 5'-end 5'-phospho-ribonucleoside-RNA + S-adenosyl-L-methionine = a 5'-end (5'-methylphospho)-ribonucleoside-RNA + S-adenosyl-L-homocysteine. It carries out the reaction a 5'-end 5'-phospho-ribonucleoside-RNA + 2 S-adenosyl-L-methionine = a 5'-end (5'-bismethylphospho)-ribonucleoside-RNA + 2 S-adenosyl-L-homocysteine. Functionally, O-methyltransferase that specifically monomethylates 5'-monophosphate of cytoplasmic histidyl tRNA (tRNA(His)), acting as a capping enzyme by protecting tRNA(His) from cleavage by DICER1. Also able, with less efficiently, to methylate the 5' monophosphate of a subset of pre-miRNAs, acting as a negative regulator of miRNA processing. The 5' monophosphate of pre-miRNAs is recognized by DICER1 and is required for pre-miRNAs processing: methylation at this position reduces the processing of pre-miRNAs by DICER1. Was also reported to mediate dimethylation of pre-miR-145; however dimethylation cannot be reproduced by another group which observes a monomethylation of pre-miR-145. This chain is Pre-miRNA 5'-monophosphate methyltransferase (bcdin3d), found in Danio rerio (Zebrafish).